Here is a 313-residue protein sequence, read N- to C-terminus: Protein FixB (313 aa).

Residue Leu255–Asp283 coordinates FAD.

It belongs to the ETF alpha-subunit/FixB family. Heterodimer of FixA and FixB.

Its pathway is amine and polyamine metabolism; carnitine metabolism. In terms of biological role, required for anaerobic carnitine reduction. May bring reductant to CaiA. This Escherichia coli O139:H28 (strain E24377A / ETEC) protein is Protein FixB.